Consider the following 519-residue polypeptide: MSARSVSPKVLLDISYKPTLPNIMELQHNVIKLIQVEQHAYMQLMEQPTAHYMQQQQQQQQHQQQQQQHQQQQQQQYAPLPSLAPNAADYAAYGITELEDTDYNIPSNEVLSTSSNHSAQSSLELNNNQHNFEQQQQQQQQQQQQQTATPAGVATAAQTPHGYMLNEHGKRSRSSSDYDCQTDALSMQPEHKKLLQQQQQQQQQQQQQQQQQLYVDYLPTTVDEVAAAQTQAQAPTQQSACLSPHSHSHSHFDFAADEELQDHKAHIFKYGGYPQTIAQQQQQQQQQQLHFQSSYRTGQNYEAYDPANSLNGSTYSSSDRDDMEYARQTALSSVGGYAKEDELEDMSPTCLGDDSSLLDAGDAAGKAFRKPRRRLKRKPSKTEETDEFSNQRVMANVRERQRTQSLNDAFKALQQIIPTLPSDKLSKIQTLKLATRYIDFLCRMLSSSDISLLKALEAQSSPVSPGYGNASTLLSAANGAEADLKCLRKANGAPIIPPEKLSYLFGVWRMEGDAQHQKA.

Disordered regions lie at residues 53 to 77 (MQQQ…QQQY), 131 to 156 (NFEQ…VATA), 301 to 321 (YEAY…SDRD), and 368 to 389 (FRKP…DEFS). Low complexity-rich tracts occupy residues 54–76 (QQQQ…QQQQ) and 134–146 (QQQQ…QQQQ). Over residues 308 to 317 (NSLNGSTYSS) the composition is skewed to polar residues. The segment covering 368–379 (FRKPRRRLKRKP) has biased composition (basic residues). The 52-residue stretch at 390-441 (NQRVMANVRERQRTQSLNDAFKALQQIIPTLPSDKLSKIQTLKLATRYIDFL) folds into the bHLH domain.

Efficient DNA binding requires dimerization with another bHLH protein. Homodimer.

Its subcellular location is the nucleus. In terms of biological role, involved in the establishment and dorsoventral patterning of germ layers in the embryo. The sequence is that of Protein twist from Drosophila virilis (Fruit fly).